We begin with the raw amino-acid sequence, 484 residues long: Probable peptide/nitrate transporter At3g43790 (484 aa).

12 consecutive transmembrane segments (helical) span residues 39 to 59 (FIWL…PYIY), 76 to 96 (FYAG…SIFW), 107 to 127 (PIIL…GLST), 129 to 149 (FWLA…LGVI), 168 to 188 (VVST…GYLA), 210 to 230 (FLPS…CWWL), 278 to 298 (MAII…NEIF), 318 to 338 (VGEV…LVYP), 355 to 375 (VLLI…GVTL), 381 to 401 (CASI…FIML), 416 to 436 (ISMT…GVLF), and 460 to 480 (VFLV…IPYI).

This sequence belongs to the major facilitator superfamily.

Its subcellular location is the membrane. This Arabidopsis thaliana (Mouse-ear cress) protein is Probable peptide/nitrate transporter At3g43790 (ZIFL2).